A 371-amino-acid polypeptide reads, in one-letter code: tRNA-specific 2-thiouridylase MnmA (371 aa).

Residues 13 to 20 (GMSGGVDS) and Met39 contribute to the ATP site. The tract at residues 99 to 101 (NPD) is interaction with target base in tRNA. Cys104 serves as the catalytic Nucleophile. A disulfide bridge links Cys104 with Cys200. ATP is bound at residue Gly128. The interval 150-152 (KDQ) is interaction with tRNA. Catalysis depends on Cys200, which acts as the Cysteine persulfide intermediate. The interaction with tRNA stretch occupies residues 308 to 309 (RY).

This sequence belongs to the MnmA/TRMU family.

The protein localises to the cytoplasm. The catalysed reaction is S-sulfanyl-L-cysteinyl-[protein] + uridine(34) in tRNA + AH2 + ATP = 2-thiouridine(34) in tRNA + L-cysteinyl-[protein] + A + AMP + diphosphate + H(+). Catalyzes the 2-thiolation of uridine at the wobble position (U34) of tRNA, leading to the formation of s(2)U34. The chain is tRNA-specific 2-thiouridylase MnmA from Bacillus anthracis.